The sequence spans 208 residues: Guanylate kinase (208 aa).

A Guanylate kinase-like domain is found at glycine 3–valine 181. Alanine 10–threonine 17 serves as a coordination point for ATP.

The protein belongs to the guanylate kinase family.

It localises to the cytoplasm. The catalysed reaction is GMP + ATP = GDP + ADP. Functionally, essential for recycling GMP and indirectly, cGMP. This Psychrobacter arcticus (strain DSM 17307 / VKM B-2377 / 273-4) protein is Guanylate kinase.